A 229-amino-acid chain; its full sequence is Triosephosphate isomerase (229 aa).

6-8 (NLK) serves as a coordination point for substrate. Histidine 85 acts as the Electrophile in catalysis. Glutamate 152 serves as the catalytic Proton acceptor. Substrate contacts are provided by glycine 158 and serine 188.

It belongs to the triosephosphate isomerase family. As to quaternary structure, homodimer.

It localises to the cytoplasm. It catalyses the reaction D-glyceraldehyde 3-phosphate = dihydroxyacetone phosphate. It functions in the pathway carbohydrate biosynthesis; gluconeogenesis. The protein operates within carbohydrate degradation; glycolysis; D-glyceraldehyde 3-phosphate from glycerone phosphate: step 1/1. Functionally, involved in the gluconeogenesis. Catalyzes stereospecifically the conversion of dihydroxyacetone phosphate (DHAP) to D-glyceraldehyde-3-phosphate (G3P). The protein is Triosephosphate isomerase of Campylobacter curvus (strain 525.92).